Reading from the N-terminus, the 106-residue chain is Small ribosomal subunit protein uS10 (106 aa).

Belongs to the universal ribosomal protein uS10 family. Part of the 30S ribosomal subunit.

In terms of biological role, involved in the binding of tRNA to the ribosomes. This chain is Small ribosomal subunit protein uS10, found in Caldicellulosiruptor bescii (strain ATCC BAA-1888 / DSM 6725 / KCTC 15123 / Z-1320) (Anaerocellum thermophilum).